Reading from the N-terminus, the 243-residue chain is Carboxy-S-adenosyl-L-methionine synthase (243 aa).

Residues Tyr40, 65-67, 90-91, 118-119, Asn133, and Arg200 each bind S-adenosyl-L-methionine; these read GCS, DN, and DI.

It belongs to the class I-like SAM-binding methyltransferase superfamily. Cx-SAM synthase family. As to quaternary structure, homodimer.

It catalyses the reaction prephenate + S-adenosyl-L-methionine = carboxy-S-adenosyl-L-methionine + 3-phenylpyruvate + H2O. In terms of biological role, catalyzes the conversion of S-adenosyl-L-methionine (SAM) to carboxy-S-adenosyl-L-methionine (Cx-SAM). This Shewanella sp. (strain ANA-3) protein is Carboxy-S-adenosyl-L-methionine synthase.